We begin with the raw amino-acid sequence, 190 residues long: dCTP deaminase (190 aa).

113–118 serves as a coordination point for dCTP; the sequence is KSTYAR. Residue E139 is the Proton donor/acceptor of the active site. DCTP is bound by residues Q158, Y172, K181, and Q182.

The protein belongs to the dCTP deaminase family. As to quaternary structure, homotrimer.

It catalyses the reaction dCTP + H2O + H(+) = dUTP + NH4(+). The protein operates within pyrimidine metabolism; dUMP biosynthesis; dUMP from dCTP (dUTP route): step 1/2. In terms of biological role, catalyzes the deamination of dCTP to dUTP. This Chlamydia trachomatis serovar A (strain ATCC VR-571B / DSM 19440 / HAR-13) protein is dCTP deaminase.